Consider the following 149-residue polypeptide: Large ribosomal subunit protein bL9 (149 aa).

This sequence belongs to the bacterial ribosomal protein bL9 family.

In terms of biological role, binds to the 23S rRNA. The polypeptide is Large ribosomal subunit protein bL9 (Persephonella marina (strain DSM 14350 / EX-H1)).